Reading from the N-terminus, the 130-residue chain is uncharacterized protein (130 aa).

2 disordered regions span residues 1-47 (MTFY…QSNT) and 78-130 (QTLE…SESS). Residues 13 to 33 (QWKQLQTQQNKKNSPRPVTSS) are compositionally biased toward polar residues. Basic residues predominate over residues 86–110 (PSKHKRKRTKYRRTKKSKHHSRKKT). The segment covering 117-130 (SERDSTTGRESESS) has biased composition (basic and acidic residues).

This is an uncharacterized protein from Torque teno mini virus 1 (isolate TLMV-CBD279).